We begin with the raw amino-acid sequence, 239 residues long: Large ribosomal subunit protein uL2 (239 aa).

Disordered regions lie at residues 1–20 (MGKSLIQQRRGKGSPTFRSP) and 203–239 (PFGGKEHHPGKPTTTSRRAPPGRKVGHIAARRTGRRK). The span at 222–239 (PPGRKVGHIAARRTGRRK) shows a compositional bias: basic residues.

This sequence belongs to the universal ribosomal protein uL2 family. Part of the 50S ribosomal subunit. Forms a bridge to the 30S subunit in the 70S ribosome.

In terms of biological role, one of the primary rRNA binding proteins. Required for association of the 30S and 50S subunits to form the 70S ribosome, for tRNA binding and peptide bond formation. It has been suggested to have peptidyltransferase activity; this is somewhat controversial. Makes several contacts with the 16S rRNA in the 70S ribosome. The protein is Large ribosomal subunit protein uL2 of Pyrococcus horikoshii (strain ATCC 700860 / DSM 12428 / JCM 9974 / NBRC 100139 / OT-3).